Here is a 296-residue protein sequence, read N- to C-terminus: Putative mannose 6-phosphate receptor-like protein C530.09c (296 aa).

The signal sequence occupies residues 1-25 (MRLLTCLINVLAGLTLFSQFQRAFG). The Lumenal portion of the chain corresponds to 26 to 206 (LTITRRGFKV…TVKKDSTLNP (181 aa)). Residues 42-197 (PFCALHHPNT…EWKTIHACPT (156 aa)) enclose the MRH domain. An intrachain disulfide couples Cys-44 to Cys-87. Asn-64, Asn-81, Asn-93, Asn-96, and Asn-143 each carry an N-linked (GlcNAc...) asparagine glycan. Disulfide bonds link Cys-147–Cys-183 and Cys-163–Cys-195. The helical transmembrane segment at 207–227 (VSVFLLFCAIAFLAYFVGGFV) threads the bilayer. The Cytoplasmic segment spans residues 228 to 249 (YQRVVLNARGLRQIPNYEMWRS). The helical transmembrane segment at 250 to 270 (LFGFISDIVIILYSSILSILP) threads the bilayer. The Lumenal segment spans residues 271–296 (SSITRMRGNRRNIDYVEDALIDDIDT).

The protein belongs to the MRL1/IGF2R family.

The protein resides in the golgi apparatus. It is found in the trans-Golgi network membrane. The protein localises to the endosome membrane. This chain is Putative mannose 6-phosphate receptor-like protein C530.09c, found in Schizosaccharomyces pombe (strain 972 / ATCC 24843) (Fission yeast).